The primary structure comprises 335 residues: Protease HtpX homolog (335 aa).

A run of 3 helical transmembrane segments spans residues 9-29, 42-62, and 64-84; these read VYMMLAVLGYFVMLLLASTIA, LFTSMVLLAGMILAISAAIIY, and ILAYAGVYISFYGLIIFLLII. Zn(2+) is bound at residue histidine 168. Glutamate 169 is an active-site residue. Histidine 172 contributes to the Zn(2+) binding site. The next 2 membrane-spanning stretches (helical) occupy residues 179-199 and 213-233; these read AVMLLFGLLPSVIFYLGYALL and AAIGIAAVIVSFIVQILVLAF. Zn(2+) is bound at residue glutamate 238.

It belongs to the peptidase M48B family. The cofactor is Zn(2+).

The protein resides in the cell membrane. The polypeptide is Protease HtpX homolog (Archaeoglobus fulgidus (strain ATCC 49558 / DSM 4304 / JCM 9628 / NBRC 100126 / VC-16)).